The chain runs to 221 residues: Vesicle transport v-SNARE 11 (221 aa).

Position 2 is an N-acetylserine (Ser-2). Residues 2 to 198 (SDVFDGYERQ…MTRRMNKNKW (197 aa)) are Cytoplasmic-facing. Positions 32 to 93 (EQKKQKLSEI…FKTEVKRITS (62 aa)) form a coiled coil. Residues 199 to 219 (TIGAIIIALIAAIFIILYFKL) form a helical; Anchor for type IV membrane protein membrane-spanning segment. At 220–221 (TK) the chain is on the vesicular side.

Belongs to the VTI1 family. As to quaternary structure, forms SNARE complexes with the t-SNAREs SYP51 and either SYP21 or SYP22 in the PVC, and with a much lower affinity with SYP61 in the TGN. Does not interact with SYP41, SYP42 or VPS45. Binds to EPSIN1. Interacts with SCYL2B. Expressed in roots, stems, flowers and leaves.

The protein resides in the golgi apparatus. It localises to the trans-Golgi network membrane. It is found in the prevacuolar compartment membrane. The protein localises to the vacuole membrane. Its function is as follows. Functions as a v-SNARE responsible for targeting AtELP-containing vesicles from the trans-Golgi network (TGN) to the prevacuolar compartment (PVC) and mediates liposome fusion. May be also involved in retrograde traffic to the cis-Golgi. Promotes the formation of vacuolar membrane 'bulbs'. Necessary to deliver proteins to the lytic vacuole, but seems not involved in storage proteins transport. Required for amyloplast sedimentation in the endodermis during shoot gravitropism, which are thus acting as statoliths. Expression in the endodermis is essential for the shoot gravitropic response, whereas expression in other tissues may be responsible for the correct stem and leaf shape. This chain is Vesicle transport v-SNARE 11, found in Arabidopsis thaliana (Mouse-ear cress).